Here is a 1423-residue protein sequence, read N- to C-terminus: Histone-lysine N-methyltransferase ATXR7 (1423 aa).

The 50-residue stretch at H263 to A312 folds into the GYF domain. 3 disordered regions span residues C923–K960, C1057–D1097, and L1115–K1158. Basic residues predominate over residues Q936 to K949. Positions N950 to T959 are enriched in basic and acidic residues. The segment covering C1057–I1071 has biased composition (polar residues). Basic and acidic residues-rich tracts occupy residues L1115 to Q1124 and H1140 to P1157. Residues K1266 to K1383 enclose the SET domain. Y1382 is an S-adenosyl-L-methionine binding site.

The protein belongs to the class V-like SAM-binding methyltransferase superfamily. Histone-lysine methyltransferase family. TRX/MLL subfamily. As to expression, expressed in the shoot and root apices, vascular tissues and mesophyll cells of rosette leaves.

It localises to the nucleus. The catalysed reaction is L-lysyl(4)-[histone H3] + 3 S-adenosyl-L-methionine = N(6),N(6),N(6)-trimethyl-L-lysyl(4)-[histone H3] + 3 S-adenosyl-L-homocysteine + 3 H(+). The enzyme catalyses L-lysyl(36)-[histone H3] + 2 S-adenosyl-L-methionine = N(6),N(6)-dimethyl-L-lysyl(36)-[histone H3] + 2 S-adenosyl-L-homocysteine + 2 H(+). Its function is as follows. Histone methyltransferase involved in regulation of flowering time. Required for the expression of the flowering repressors FLC and MADS-box genes of the MAF family. Required for histone H3 dimethylation on 'Lys-36' H3K36me2 at the FLC locus. Required for histone H3 trimethylation on 'Lys-4' (H3K4me3) at the FLC locus. Prevents trimethylation on 'Lys-27' (H3K27me3) at the same locus. Involved in the control of seed dormancy and germination. The protein is Histone-lysine N-methyltransferase ATXR7 of Arabidopsis thaliana (Mouse-ear cress).